Reading from the N-terminus, the 361-residue chain is Single-stranded DNA-binding protein 3 (361 aa).

The residue at position 1 (Met1) is an N-acetylmethionine. The region spanning 16–48 (AREKLALYVYEYLLHVGAQKSAQTFLSEIRWEK) is the LisH domain. Residues Arg128, Arg134, and Arg138 each carry the asymmetric dimethylarginine modification. Disordered stretches follow at residues 140-166 (GNQP…QQGH) and 184-361 (PMGP…TMSV). Residues 223–241 (PNSANSIPYSSSSPGTYVG) are compositionally biased toward low complexity. Positions 245-255 (GGGPPGTPIMP) are enriched in pro residues. The span at 258–269 (ADSTNSSDNIYT) shows a compositional bias: polar residues. Residues 288 to 298 (GSDGPMGGMGG) show a composition bias toward gly residues. The span at 319-330 (NSPNNISGISNP) shows a compositional bias: low complexity. 3 positions are modified to phosphoserine: Ser320, Ser325, and Ser328. Thr333 is modified (phosphothreonine). Polar residues predominate over residues 346–361 (HSFQNDNYSPSMTMSV). Residues Ser354 and Ser360 each carry the phosphoserine modification.

The protein localises to the nucleus. In terms of biological role, may be involved in transcription regulation of the alpha 2(I) collagen gene where it binds to the single-stranded polypyrimidine sequences in the promoter region. The polypeptide is Single-stranded DNA-binding protein 3 (Ssbp3) (Rattus norvegicus (Rat)).